Consider the following 402-residue polypeptide: Metacaspase-1 (402 aa).

The tract at residues 1-79 (MAYPGQGGHH…FAPPSGPIGP (79 aa)) is disordered. The segment covering 23 to 45 (PAPHGYAQPGYGYAPPSGPPQGY) has biased composition (low complexity). Catalysis depends on residues histidine 193 and cysteine 249.

Belongs to the peptidase C14B family.

Involved in cell death (apoptosis). The polypeptide is Metacaspase-1 (MCA1) (Mycosarcoma maydis (Corn smut fungus)).